The chain runs to 275 residues: Peflin (275 aa).

8 consecutive repeat copies span residues 21 to 29 (PPGGYYPGP), 31 to 39 (HGGGQYGSG), 41 to 49 (PPGGGYGAP), 50 to 59 (APGGPYGYPS), 60 to 68 (AGGVPSGTP), 76 to 84 (PPGGPYGQL), 85 to 91 (PPGGPYG), and 92 to 100 (TQPGHYGQG). 2 disordered regions span residues 21 to 45 (PPGG…PGGG) and 59 to 103 (SAGG…GGVP). Residues 21-100 (PPGGYYPGPP…GTQPGHYGQG (80 aa)) form an 8 X 9 AA approximate tandem repeat of [AP]-P-G-G-P-Y-G-G-P-P region. A compositionally biased stretch (gly residues) spans 31 to 45 (HGGGQYGSGLPPGGG). Low complexity predominate over residues 59-70 (SAGGVPSGTPSG). 5 EF-hand domains span residues 105–140 (NVDP…SNWS), 146–174 (TCLM…WKFL), 172–207 (KFLQ…MGYN), 208–244 (LSPQ…LQVL), and 245–274 (TEAF…ASRM). Ca(2+)-binding residues include Asp118, Asp120, Ser122, Tyr124, and Glu129. Ca(2+) is bound by residues Asp185, Asp187, Ser189, Ser191, and Glu196. Positions 195-275 (TELQQALSQM…FVTMTASRML (81 aa)) are required for interaction with PDCD6.

Heterodimer; heterodimerizes (via the EF-hand 5) with PDCD6. Dissociates from PDCD6 in presence of calcium. Post-translationally, ubiquitinated by the BCR(KLHL12) E3 ubiquitin ligase complex.

The protein localises to the cytoplasm. The protein resides in the endoplasmic reticulum. It localises to the membrane. Its subcellular location is the cytoplasmic vesicle. It is found in the COPII-coated vesicle membrane. Its function is as follows. Calcium-binding protein that acts as an adapter that bridges unrelated proteins or stabilizes weak protein-protein complexes in response to calcium. Together with PDCD6, acts as a calcium-dependent adapter for the BCR(KLHL12) complex, a complex involved in endoplasmic reticulum (ER)-Golgi transport by regulating the size of COPII coats. In response to cytosolic calcium increase, the heterodimer formed with PDCD6 interacts with, and bridges together the BCR(KLHL12) complex and SEC31 (SEC31A or SEC31B), promoting monoubiquitination of SEC31 and subsequent collagen export, which is required for neural crest specification. Its role in the heterodimer formed with PDCD6 is however unclear: some evidence shows that PEF1 and PDCD6 work together and promote association between PDCD6 and SEC31 in presence of calcium. Other reports show that PEF1 dissociates from PDCD6 in presence of calcium, and may act as a negative regulator of PDCD6. Also acts as a negative regulator of ER-Golgi transport; possibly by inhibiting interaction between PDCD6 and SEC31. The polypeptide is Peflin (Mus musculus (Mouse)).